A 465-amino-acid chain; its full sequence is Cysteine--tRNA ligase (465 aa).

Cys30 contributes to the Zn(2+) binding site. Positions 32 to 42 match the 'HIGH' region motif; that stretch reads ITVYDYCHIGH. Zn(2+) is bound by residues Cys214, His239, and Glu243. Residues 271–275 carry the 'KMSKS' region motif; it reads KMSKS. Residue Lys274 participates in ATP binding.

This sequence belongs to the class-I aminoacyl-tRNA synthetase family. Monomer. The cofactor is Zn(2+).

The protein resides in the cytoplasm. The catalysed reaction is tRNA(Cys) + L-cysteine + ATP = L-cysteinyl-tRNA(Cys) + AMP + diphosphate. The sequence is that of Cysteine--tRNA ligase from Burkholderia mallei (strain NCTC 10229).